A 151-amino-acid polypeptide reads, in one-letter code: 3-hydroxyacyl-[acyl-carrier-protein] dehydratase FabZ (151 aa).

His-54 is an active-site residue.

Belongs to the thioester dehydratase family. FabZ subfamily.

The protein localises to the cytoplasm. It carries out the reaction a (3R)-hydroxyacyl-[ACP] = a (2E)-enoyl-[ACP] + H2O. Functionally, involved in unsaturated fatty acids biosynthesis. Catalyzes the dehydration of short chain beta-hydroxyacyl-ACPs and long chain saturated and unsaturated beta-hydroxyacyl-ACPs. The chain is 3-hydroxyacyl-[acyl-carrier-protein] dehydratase FabZ from Buchnera aphidicola subsp. Acyrthosiphon pisum (strain 5A).